A 304-amino-acid chain; its full sequence is Heme A synthase (304 aa).

At 1–8 the chain is on the cytoplasmic side; the sequence is MFNKRNLK. Residues 9 to 29 traverse the membrane as a helical segment; it reads WLSVLATIIMAFVQLGGALVT. At 30–67 the chain is on the extracellular side; it reads KTGSEDGCGSSWPLCHGALLPQNLPIDTIIELSHRAVS. A disulfide bond links Cys-37 and Cys-44. Glu-60 is a catalytic residue. His-63 serves as a coordination point for heme o. A helical transmembrane segment spans residues 68–88; sequence GLSLIVVLWLAITAWKHIGYI. Residues 89 to 93 are Cytoplasmic-facing; the sequence is REVKP. The helical transmembrane segment at 94–114 threads the bilayer; the sequence is LAIISIAFLLVQALIGAAAVI. Residues 115–123 are Extracellular-facing; the sequence is WQQNSYVLA. A helical membrane pass occupies residues 124 to 144; the sequence is LHFGISLISFSSVFVLMLIIF. His-125 lines the heme o pocket. Residues 145–163 lie on the Cytoplasmic side of the membrane; sequence EVDKKYEADELYIRKPLRR. Residues 164–184 traverse the membrane as a helical segment; it reads LTWIMTGIVYLTIYTGALVRH. Over 185–215 the chain is Extracellular; sequence AKASLAYGGWPLPFHDIIPHTEQDWVQFAHR. His-214 lines the heme b pocket. A helical membrane pass occupies residues 216–236; the sequence is GMAFITFFWIMITFIHAVKNY. Residues 237–244 lie on the Cytoplasmic side of the membrane; that stretch reads SENRTIRY. Residues 245–265 traverse the membrane as a helical segment; the sequence is GYTTAFILIILQVITGALSVM. At 266–270 the chain is on the extracellular side; that stretch reads TNVNL. A helical transmembrane segment spans residues 271–291; it reads FIALLHALFITILFGMIAYFI. Heme b is bound at residue His-276. At 292 to 304 the chain is on the cytoplasmic side; it reads MLMLRTIRSEKIK.

The protein belongs to the COX15/CtaA family. Type 1 subfamily. Interacts with CtaB. The cofactor is heme b.

The protein localises to the cell membrane. It carries out the reaction Fe(II)-heme o + 2 A + H2O = Fe(II)-heme a + 2 AH2. It functions in the pathway porphyrin-containing compound metabolism; heme A biosynthesis; heme A from heme O: step 1/1. Catalyzes the conversion of heme O to heme A by two successive hydroxylations of the methyl group at C8. The first hydroxylation forms heme I, the second hydroxylation results in an unstable dihydroxymethyl group, which spontaneously dehydrates, resulting in the formyl group of heme A. The chain is Heme A synthase from Staphylococcus haemolyticus (strain JCSC1435).